Reading from the N-terminus, the 120-residue chain is Secreted effector PIT2 (120 aa).

Residues 1 to 25 form the signal peptide; it reads MLFRSAFVLLIVAFASACLVQHVQA. Positions 46 to 59 are PID14 protease inhibitor domain; sequence KLNRRWWFGFTGSL.

Interacts with host cysteine proteases CP1A, CP1B, XCP2 and CP2. Post-translationally, cleaved by host target papain-like cysteine proteases (PLCPs) to release the embedded inhibitor peptide PID14.

The protein localises to the secreted. In terms of biological role, secreted effector required for virulence. Functions as an inhibitor of a set of apoplastic maize papain-like cysteine proteases (PLCPs) including CP1A, CP1B, XCP2 and CP2, whose activity is directly linked with salicylic-acid-associated plant defenses. Acts as a substrate mimicking molecule for apoplastic PLCPs and its processing releases the embedded inhibitor peptide PID14, which in turn blocks PLCPs to modulate host immunity. The polypeptide is Secreted effector PIT2 (Mycosarcoma maydis (Corn smut fungus)).